A 286-amino-acid chain; its full sequence is MSVTLQTVLYSLQEEQARLKMRLQELQQLKRERTGSPGAKIPFSVPEVPLVFQGQTKQGRQVPKFVVSNLKVCCPLPEGSALVTFEDPKVVDRLLQQKEHRVNLEDCRLRVQVQPLELPVVTNIQVSSQPDNHRVLVSGFPAGLRLSEEELLDKLEIFFGKAKNGGGDVETREMLQGTVMLGFADEEVAQHLCQIGQFRVPLDRQQVLLRVSPYVSGEIQKAEIKFQQAPHSVLVTNIPDVMDAQELHDILEIHFQKPTRGGGEVEALTVVPSGQQGLAIFTSESS.

The segment at 5-26 (LQTVLYSLQEEQARLKMRLQEL) is leucine-zipper. 2 consecutive NID domains span residues 81 to 170 (ALVT…GDVE) and 183 to 266 (FADE…GEVE).

The protein belongs to the NMI family. Homodimer. Also interacts with B-ATF. Interacts with TRIM21. Interacts (via NID domains) with NMI (via NID domains); the interaction is direct and is facilitated by TRIM21. In terms of processing, phosphorylated. Dephosphorylation correlates with the formation of a complex with NMI.

It localises to the cytoplasm. The protein localises to the nucleus. It is found in the secreted. In terms of biological role, acts as a signaling pathway regulator involved in innate immune system response. In response to interferon IFN-alpha, associates in a complex with transcriptional regulator NMI to regulate immune response; the complex formation prevents proteasome-mediated degradation of IFI35 and correlates with IFI35 dephosphorylation. In complex with NMI, inhibits virus-triggered type I interferon/IFN-beta production. In complex with NMI, negatively regulates nuclear factor NF-kappa-B signaling by inhibiting the nuclear translocation, activation and transcription of the NF-kappa-B subunit p65/RELA, resulting in the inhibition of endothelial cell proliferation, migration and re-endothelialization of injured arteries. Beside its role as an intracellular signaling pathway regulator, also functions extracellularly as damage-associated molecular patterns (DAMPs) to promote inflammation when actively released by macrophage to the extracellular space during cell injury and pathogen invasion. Macrophage-secreted IFI35 activates NF-kappa-B signaling in adjacent macrophages through Toll-like receptor 4/TLR4 activation, thereby inducing NF-kappa-B translocation from the cytoplasm into the nucleus which promotes the release of pro-inflammatory cytokines. This Mus musculus (Mouse) protein is Interferon-induced 35 kDa protein homolog.